A 123-amino-acid polypeptide reads, in one-letter code: uncharacterized protein (123 aa).

Residues 5–25 (GTLVILFAIILILCIMLLFYY) traverse the membrane as a helical segment.

The protein belongs to the asfivirus CP123L family.

The protein resides in the host membrane. Its subcellular location is the virion. This is an uncharacterized protein from Ornithodoros (relapsing fever ticks).